Reading from the N-terminus, the 601-residue chain is ATP-dependent lipid A-core flippase (601 aa).

Helical transmembrane passes span 26 to 46, 82 to 102, 167 to 187, and 263 to 283; these read VGLF…QPML, LMIV…NYFL, VFLF…MVAI, and VYTP…LFLV. Residues 30 to 321 form the ABC transmembrane type-1 domain; sequence AVSILGYVIF…LSEVSSTIQR (292 aa). An ABC transporter domain is found at 353–589; that stretch reads IEVRDLSFRY…GGHYARLHAM (237 aa). Residue 387 to 394 participates in ATP binding; it reads GRSGSGKS.

This sequence belongs to the ABC transporter superfamily. Lipid exporter (TC 3.A.1.106) family. As to quaternary structure, homodimer.

The protein localises to the cell inner membrane. It catalyses the reaction ATP + H2O + lipid A-core oligosaccharideSide 1 = ADP + phosphate + lipid A-core oligosaccharideSide 2.. Involved in lipopolysaccharide (LPS) biosynthesis. Translocates lipid A-core from the inner to the outer leaflet of the inner membrane. Transmembrane domains (TMD) form a pore in the inner membrane and the ATP-binding domain (NBD) is responsible for energy generation. The protein is ATP-dependent lipid A-core flippase of Aromatoleum aromaticum (strain DSM 19018 / LMG 30748 / EbN1) (Azoarcus sp. (strain EbN1)).